Reading from the N-terminus, the 75-residue chain is Exodeoxyribonuclease 7 small subunit (75 aa).

Belongs to the XseB family. As to quaternary structure, heterooligomer composed of large and small subunits.

It is found in the cytoplasm. The catalysed reaction is Exonucleolytic cleavage in either 5'- to 3'- or 3'- to 5'-direction to yield nucleoside 5'-phosphates.. Bidirectionally degrades single-stranded DNA into large acid-insoluble oligonucleotides, which are then degraded further into small acid-soluble oligonucleotides. The chain is Exodeoxyribonuclease 7 small subunit from Elusimicrobium minutum (strain Pei191).